Consider the following 81-residue polypeptide: uncharacterized protein (81 aa).

A mitochondrion-targeting transit peptide spans 1–20; sequence MYSRVLSVAAIVTMALAVQA. The tract at residues 27–53 is disordered; that stretch reads YGNTTNSTGTTNGTNGTNTTTSSTATQ. A compositionally biased stretch (low complexity) spans 28–53; the sequence is GNTTNSTGTTNGTNGTNTTTSSTATQ. A helical membrane pass occupies residues 59-79; that stretch reads ITNFSSGAFVIAMIAVACSVM.

The protein localises to the mitochondrion membrane. This is an uncharacterized protein from Schizosaccharomyces pombe (strain 972 / ATCC 24843) (Fission yeast).